Reading from the N-terminus, the 59-residue chain is U-reduvitoxin-Pr6a (59 aa).

The N-terminal stretch at methionine 1 to glycine 19 is a signal peptide. 3 disulfides stabilise this stretch: cysteine 31–cysteine 46, cysteine 38–cysteine 51, and cysteine 45–cysteine 58.

It belongs to the venom Ptu1-like knottin family. As to expression, expressed by the venom gland.

The protein localises to the secreted. Binds reversibly and blocks P/Q-type voltage-gated calcium channels (Cav). In Platymeris rhadamanthus (Red spot assassin bug), this protein is U-reduvitoxin-Pr6a.